Consider the following 265-residue polypeptide: Photosystem II 22 kDa protein, chloroplastic (265 aa).

Residues 1 to 59 constitute a chloroplast transit peptide; that stretch reads MAQTMLLTSGVTAGHFLRNKSPLAQPKVHHLFLSGNSPVALPSRRQSFVPLALFKPKTK. A run of 2 repeats spans residues 54-158 and 159-264. The next 4 membrane-spanning stretches (helical) occupy residues 96–116, 130–150, 195–215, and 229–249; these read VAMIGFAASLLGEALTGKGIL, AEPLLLFFILFTLLGAIGALG, LFVGRLAQLGIAFSLIGEIIT, and IPIQDIEPLVLLNVAFFFFAA.

The protein belongs to the ELIP/psbS family.

The protein resides in the plastid. The protein localises to the chloroplast thylakoid membrane. Plays an important role in non-photochemical quenching (NPQ), a process maintains the balance between dissipation and utilization of light energy to minimize generation of oxidizing molecules, thereby protecting the plant against photo-oxidative damage; acts upstream of DLDG1. Is not necessary for efficient light harvesting and photosynthesis. This is Photosystem II 22 kDa protein, chloroplastic from Arabidopsis thaliana (Mouse-ear cress).